Consider the following 877-residue polypeptide: Alanine--tRNA ligase (877 aa).

Zn(2+)-binding residues include histidine 566, histidine 570, cysteine 668, and histidine 672.

This sequence belongs to the class-II aminoacyl-tRNA synthetase family. Requires Zn(2+) as cofactor.

The protein resides in the cytoplasm. It carries out the reaction tRNA(Ala) + L-alanine + ATP = L-alanyl-tRNA(Ala) + AMP + diphosphate. Catalyzes the attachment of alanine to tRNA(Ala) in a two-step reaction: alanine is first activated by ATP to form Ala-AMP and then transferred to the acceptor end of tRNA(Ala). Also edits incorrectly charged Ser-tRNA(Ala) and Gly-tRNA(Ala) via its editing domain. This Staphylococcus aureus (strain USA300 / TCH1516) protein is Alanine--tRNA ligase.